A 185-amino-acid polypeptide reads, in one-letter code: Elongation factor P (185 aa).

Belongs to the elongation factor P family.

It localises to the cytoplasm. The protein operates within protein biosynthesis; polypeptide chain elongation. In terms of biological role, involved in peptide bond synthesis. Stimulates efficient translation and peptide-bond synthesis on native or reconstituted 70S ribosomes in vitro. Probably functions indirectly by altering the affinity of the ribosome for aminoacyl-tRNA, thus increasing their reactivity as acceptors for peptidyl transferase. This is Elongation factor P from Bacillus cereus (strain ATCC 10987 / NRS 248).